The following is a 421-amino-acid chain: Glutamyl-tRNA reductase (421 aa).

Substrate-binding positions include 49–52 (TCNR), Ser-109, 114–116 (EPQ), and Gln-120. The active-site Nucleophile is the Cys-50. 189–194 (GAGKMS) lines the NADP(+) pocket.

The protein belongs to the glutamyl-tRNA reductase family. In terms of assembly, homodimer.

The catalysed reaction is (S)-4-amino-5-oxopentanoate + tRNA(Glu) + NADP(+) = L-glutamyl-tRNA(Glu) + NADPH + H(+). It functions in the pathway porphyrin-containing compound metabolism; protoporphyrin-IX biosynthesis; 5-aminolevulinate from L-glutamyl-tRNA(Glu): step 1/2. Its function is as follows. Catalyzes the NADPH-dependent reduction of glutamyl-tRNA(Glu) to glutamate 1-semialdehyde (GSA). This is Glutamyl-tRNA reductase from Solibacter usitatus (strain Ellin6076).